A 118-amino-acid polypeptide reads, in one-letter code: UPF0342 protein BCG9842_B4422 (118 aa).

The protein belongs to the UPF0342 family.

This chain is UPF0342 protein BCG9842_B4422, found in Bacillus cereus (strain G9842).